The following is a 689-amino-acid chain: Glycine--tRNA ligase beta subunit (689 aa).

The protein belongs to the class-II aminoacyl-tRNA synthetase family. Tetramer of two alpha and two beta subunits.

The protein localises to the cytoplasm. It carries out the reaction tRNA(Gly) + glycine + ATP = glycyl-tRNA(Gly) + AMP + diphosphate. The chain is Glycine--tRNA ligase beta subunit from Escherichia coli O7:K1 (strain IAI39 / ExPEC).